The sequence spans 316 residues: Ribosomal protein L11 methyltransferase (316 aa).

S-adenosyl-L-methionine contacts are provided by threonine 161, glycine 182, aspartate 204, and asparagine 249.

Belongs to the methyltransferase superfamily. PrmA family.

The protein localises to the cytoplasm. The enzyme catalyses L-lysyl-[protein] + 3 S-adenosyl-L-methionine = N(6),N(6),N(6)-trimethyl-L-lysyl-[protein] + 3 S-adenosyl-L-homocysteine + 3 H(+). Functionally, methylates ribosomal protein L11. This Ruminiclostridium cellulolyticum (strain ATCC 35319 / DSM 5812 / JCM 6584 / H10) (Clostridium cellulolyticum) protein is Ribosomal protein L11 methyltransferase.